The primary structure comprises 255 residues: Thiazole synthase (255 aa).

Lysine 95 functions as the Schiff-base intermediate with DXP in the catalytic mechanism. 1-deoxy-D-xylulose 5-phosphate is bound by residues glycine 156, 182–183 (AG), and 204–205 (NT).

This sequence belongs to the ThiG family. Homotetramer. Forms heterodimers with either ThiH or ThiS.

It localises to the cytoplasm. It catalyses the reaction [ThiS sulfur-carrier protein]-C-terminal-Gly-aminoethanethioate + 2-iminoacetate + 1-deoxy-D-xylulose 5-phosphate = [ThiS sulfur-carrier protein]-C-terminal Gly-Gly + 2-[(2R,5Z)-2-carboxy-4-methylthiazol-5(2H)-ylidene]ethyl phosphate + 2 H2O + H(+). The protein operates within cofactor biosynthesis; thiamine diphosphate biosynthesis. Its function is as follows. Catalyzes the rearrangement of 1-deoxy-D-xylulose 5-phosphate (DXP) to produce the thiazole phosphate moiety of thiamine. Sulfur is provided by the thiocarboxylate moiety of the carrier protein ThiS. In vitro, sulfur can be provided by H(2)S. The polypeptide is Thiazole synthase (Vibrio campbellii (strain ATCC BAA-1116)).